A 779-amino-acid polypeptide reads, in one-letter code: Mediator of RNA polymerase II transcription subunit 15 (779 aa).

2 stretches are compositionally biased toward polar residues: residues 70 to 90 and 98 to 108; these read NKNQQNPAGGSQDGGNPNQQG and ALQTLATQGTR. Disordered stretches follow at residues 70 to 131, 209 to 407, 437 to 512, and 629 to 649; these read NKNQ…GGNA, NPMQ…VPIG, FLRQ…NPQE, and PAKQPRLAIDEPSTSGSTGSQ. Residues 114–130 show a composition bias toward gly residues; it reads GQMGPGGPMGNQMGGGN. Composition is skewed to low complexity over residues 209-232 and 240-270; these read NPMQMGVSGMPQGAGQQQPQQPQG and PNQMNPMGGMGMQVNPGGHMNQNAINQQMNQ. The segment covering 274–284 has biased composition (gly residues); sequence SSGGNQMGNLG. 3 stretches are compositionally biased toward low complexity: residues 285-295, 304-329, and 339-350; these read GNSPMNPGNMG, QQMPPGMNPNQQQLGMAGGQMNQMNQ, and GPVQQQQQPGQV. A compositionally biased stretch (gly residues) spans 351–361; sequence GMAGMGPGGPG. Composition is skewed to low complexity over residues 362 to 383, 393 to 402, and 451 to 468; these read NLQQQNNPQQQSQGGPNAAPGQ, NMQAMGNQGN, and GPGSIGPQSHPGQMIPSP. Composition is skewed to polar residues over residues 477–500 and 640–649; these read QVSSNIPAPRNIGQSPGQSLNTPG and PSTSGSTGSQ.

This sequence belongs to the Mediator complex subunit 15 family. As to quaternary structure, component of the Mediator complex.

It is found in the nucleus. Its function is as follows. Component of the Mediator complex, a coactivator involved in the regulated transcription of nearly all RNA polymerase II-dependent genes. Mediator functions as a bridge to convey information from gene-specific regulatory proteins to the basal RNA polymerase II transcription machinery. Mediator is recruited to promoters by direct interactions with regulatory proteins and serves as a scaffold for the assembly of a functional preinitiation complex with RNA polymerase II and the general transcription factors. The sequence is that of Mediator of RNA polymerase II transcription subunit 15 (MED15) from Aedes aegypti (Yellowfever mosquito).